A 461-amino-acid polypeptide reads, in one-letter code: Photosystem II CP43 reaction center protein (461 aa).

Residues M1–E2 constitute a propeptide that is removed on maturation. An N-acetylthreonine modification is found at T3. Phosphothreonine is present on T3. The next 5 membrane-spanning stretches (helical) occupy residues L57–A81, L122–N143, K166–T188, T243–S263, and W279–S300. E355 is a binding site for [CaMn4O5] cluster. Residues R435–P459 form a helical membrane-spanning segment.

The protein belongs to the PsbB/PsbC family. PsbC subfamily. PSII is composed of 1 copy each of membrane proteins PsbA, PsbB, PsbC, PsbD, PsbE, PsbF, PsbH, PsbI, PsbJ, PsbK, PsbL, PsbM, PsbT, PsbX, PsbY, PsbZ, Psb30/Ycf12, at least 3 peripheral proteins of the oxygen-evolving complex and a large number of cofactors. It forms dimeric complexes. The cofactor is Binds multiple chlorophylls and provides some of the ligands for the Ca-4Mn-5O cluster of the oxygen-evolving complex. It may also provide a ligand for a Cl- that is required for oxygen evolution. PSII binds additional chlorophylls, carotenoids and specific lipids..

Its subcellular location is the plastid. The protein resides in the chloroplast thylakoid membrane. Its function is as follows. One of the components of the core complex of photosystem II (PSII). It binds chlorophyll and helps catalyze the primary light-induced photochemical processes of PSII. PSII is a light-driven water:plastoquinone oxidoreductase, using light energy to abstract electrons from H(2)O, generating O(2) and a proton gradient subsequently used for ATP formation. The sequence is that of Photosystem II CP43 reaction center protein from Tetradesmus obliquus (Green alga).